A 227-amino-acid chain; its full sequence is Zeamatin (227 aa).

The N-terminal stretch at 1–20 (MAGSVAIVGIFVALLAVAGE) is a signal peptide. Cystine bridges form between cysteine 30/cysteine 226, cysteine 72/cysteine 82, cysteine 87/cysteine 93, cysteine 139/cysteine 215, cysteine 145/cysteine 198, cysteine 153/cysteine 163, cysteine 167/cysteine 176, and cysteine 177/cysteine 185.

The protein belongs to the thaumatin family.

Functionally, has antifungal activity. Inhibits Candida albicans and Trichoderma reesei; marginal inhibition observed against Alternaria solani and Neurospora crassa. This chain is Zeamatin (Zlp), found in Zea mays (Maize).